Here is a 602-residue protein sequence, read N- to C-terminus: Elongation factor 4 (602 aa).

One can recognise a tr-type G domain in the interval 7–189; the sequence is SQIRNFSIIA…AIVHRIPPPA (183 aa). GTP is bound by residues 19 to 24 and 136 to 139; these read DHGKST and NKID.

The protein belongs to the TRAFAC class translation factor GTPase superfamily. Classic translation factor GTPase family. LepA subfamily.

The protein localises to the cell inner membrane. It catalyses the reaction GTP + H2O = GDP + phosphate + H(+). Its function is as follows. Required for accurate and efficient protein synthesis under certain stress conditions. May act as a fidelity factor of the translation reaction, by catalyzing a one-codon backward translocation of tRNAs on improperly translocated ribosomes. Back-translocation proceeds from a post-translocation (POST) complex to a pre-translocation (PRE) complex, thus giving elongation factor G a second chance to translocate the tRNAs correctly. Binds to ribosomes in a GTP-dependent manner. In Gloeobacter violaceus (strain ATCC 29082 / PCC 7421), this protein is Elongation factor 4.